The sequence spans 59 residues: MGVPKKRTSSMRRDRRRAANFKLKPVNVVKCPKCKEPVLPHRACPSCGTYKGEQITEAS.

It belongs to the bacterial ribosomal protein bL32 family.

The sequence is that of Large ribosomal subunit protein bL32 from Anaeromyxobacter dehalogenans (strain 2CP-C).